Here is a 612-residue protein sequence, read N- to C-terminus: Polyadenylation factor subunit 2 (612 aa).

The segment at 1–21 (MAYEPRGDHGGGGGGQGQDGA) is disordered. 7 WD repeats span residues 93–132 (KIKH…FETI), 135–175 (AHDS…QSIN), 177–215 (HTDP…MESK), 218–257 (GHGW…CLTT), 260–300 (GHKS…DICL), 303–345 (GHEK…PGQS), and 373–412 (AHDY…DAEV). 3 disordered regions span residues 424 to 450 (AEAQ…MEDE), 486 to 514 (PPPP…GSLP), and 544 to 612 (PPPG…TRAR). Residues 430 to 442 (WDRRGGRRQRQEE) show a composition bias toward basic and acidic residues. Composition is skewed to pro residues over residues 486 to 506 (PPPP…PFPL) and 544 to 575 (PPPG…PPPM).

The protein resides in the nucleus. Its function is as follows. Required for 3'-end cleavage and polyadenylation of pre-mRNAs. Also involved in chromosome segregation where it has a role in chromosome attachment to the mitotic spindle. This Gibberella zeae (strain ATCC MYA-4620 / CBS 123657 / FGSC 9075 / NRRL 31084 / PH-1) (Wheat head blight fungus) protein is Polyadenylation factor subunit 2 (PFS2).